We begin with the raw amino-acid sequence, 602 residues long: MLTYMEVHLYFTLPVLALLAFLYKPFFTTKDRFKYIFLCTVAFATASPWDNYIVYHKAWSYCPECVTAVIGYVPLEEYMFFIIMTLITVTFTSLTMRWTLPSFFIRPETPVFQSVCVRYIPIVGFLTIAAKAWASSIPDSHPFYGACILWYVCPVLALLWIGSGEYMLRRWKAVLFSIAVPTIFLCWVDQYAIARGTWDISRRTSTGIMVLPSLPLEEFLFFLLIDTVLVFASCATDRAHAIVHIYITPMNHNKVSTWYMDFFYLCWAFLQTDQALSGETLSDLDATWRILREASASFYTASSVFSFEARQDLGVLYGFCRATDDLADNNDVSVPDRKKQLELVRGFVRQMFDSKHGHPDIDWTQYSGSIPDSFIAAFRSFTRLRDVLEIKAVEELLDGYTFDLEQREVKNEDDLVYYSACVASSVGEMCTRVLMASEPGGNRTMLKWTVERARDMGLALQLTNIARDIVTDSKQLGRSYVPRDWLTSQESALLKAGKARELGDERLRQIALKMVYTADDLNLMASRAIDYLPPSSRCGVRAACNVYTAIGVSLHKANGYPDRAHLTKLERMKVTFRCVYGFRKGHQGVQGDRGKSQAFTVI.

The tract at residues 1–238 is lycopene beta-cyclase; that stretch reads MLTYMEVHLY…LVFASCATDR (238 aa). 7 helical membrane-spanning segments follow: residues 7–27, 35–55, 69–89, 110–130, 142–162, 173–193, and 211–231; these read VHLY…KPFF, YIFL…YIVY, VIGY…LITV, PVFQ…TIAA, PFYG…LWIG, AVLF…QYAI, and LPSL…VLVF. Positions 245–602 are phytoene synthase; that stretch reads IYITPMNHNK…RGKSQAFTVI (358 aa).

This sequence in the N-terminal section; belongs to the lycopene beta-cyclase family. In the C-terminal section; belongs to the phytoene/squalene synthase family.

It is found in the membrane. It carries out the reaction all-trans-lycopene = gamma-carotene. The enzyme catalyses gamma-carotene = all-trans-beta-carotene. It catalyses the reaction 2 (2E,6E,10E)-geranylgeranyl diphosphate = 15-cis-phytoene + 2 diphosphate. Its pathway is carotenoid biosynthesis; beta-carotene biosynthesis. It functions in the pathway carotenoid biosynthesis; phytoene biosynthesis; all-trans-phytoene from geranylgeranyl diphosphate: step 1/1. Bifunctional enzyme that catalyzes the reactions from geranylgeranyl diphosphate to phytoene (phytoene synthase) and lycopene to beta-carotene via the intermediate gamma-carotene (lycopene cyclase). This chain is Bifunctional lycopene cyclase/phytoene synthase, found in Phycomyces blakesleeanus (strain ATCC 8743b / DSM 1359 / FGSC 10004 / NBRC 33097 / NRRL 1555).